The primary structure comprises 481 residues: ATP synthase subunit beta (481 aa).

ATP is bound at residue G160–T167.

It belongs to the ATPase alpha/beta chains family. As to quaternary structure, F-type ATPases have 2 components, CF(1) - the catalytic core - and CF(0) - the membrane proton channel. CF(1) has five subunits: alpha(3), beta(3), gamma(1), delta(1), epsilon(1). CF(0) has three main subunits: a(1), b(2) and c(9-12). The alpha and beta chains form an alternating ring which encloses part of the gamma chain. CF(1) is attached to CF(0) by a central stalk formed by the gamma and epsilon chains, while a peripheral stalk is formed by the delta and b chains.

The protein localises to the cell inner membrane. The enzyme catalyses ATP + H2O + 4 H(+)(in) = ADP + phosphate + 5 H(+)(out). Produces ATP from ADP in the presence of a proton gradient across the membrane. The catalytic sites are hosted primarily by the beta subunits. The sequence is that of ATP synthase subunit beta from Stigmatella aurantiaca.